The primary structure comprises 322 residues: Arginase (322 aa).

Residues His-113, Asp-141, His-143, and Asp-145 each contribute to the Mn(2+) site. Substrate is bound by residues 143–147, 154–156, and Asp-200; these read HADIN and SGN. Residues Asp-247 and Asp-249 each coordinate Mn(2+). 2 residues coordinate substrate: Thr-261 and Glu-292.

The protein belongs to the arginase family. As to quaternary structure, homotrimer. Requires Mn(2+) as cofactor.

The enzyme catalyses L-arginine + H2O = urea + L-ornithine. The protein operates within nitrogen metabolism; urea cycle; L-ornithine and urea from L-arginine: step 1/1. This Coccidioides immitis (strain RS) (Valley fever fungus) protein is Arginase (ARG).